We begin with the raw amino-acid sequence, 488 residues long: Germacrene A hydroxylase (488 aa).

A helical; Signal-anchor for type II membrane protein transmembrane segment spans residues 7–23; that stretch reads TSIALATILFFVYKFAT. 4 N-linked (GlcNAc...) asparagine glycosylation sites follow: Asn169, Asn260, Asn379, and Asn410. A heme-binding site is contributed by Cys432.

It belongs to the cytochrome P450 family. In terms of tissue distribution, expressed in floral glandular trichomes.

The protein localises to the endoplasmic reticulum membrane. It carries out the reaction (+)-(R)-germacrene A + 3 reduced [NADPH--hemoprotein reductase] + 3 O2 = germacra-1(10),4,11(13)-trien-12-oate + 3 oxidized [NADPH--hemoprotein reductase] + 4 H2O + 4 H(+). Its pathway is secondary metabolite biosynthesis; terpenoid biosynthesis. Its function is as follows. Involved in the biosynthesis of germacrene-derived sesquiterpene lactones. Component of the parthenolide biosynthetic pathway; parthenolide and conjugates are promising anti-cancer drugs highly active against colon cancer cells. Catalyzes three consecutive oxidations of germacrene A to produce germacrene A acid. The protein is Germacrene A hydroxylase of Tanacetum parthenium (Feverfew).